We begin with the raw amino-acid sequence, 1597 residues long: Glucosyltransferase-I (1597 aa).

The first 38 residues, 1 to 38 (MEKNERFKMHKVKKRWVTISVASATMLASALGASVASA), serve as a signal peptide directing secretion. The disordered stretch occupies residues 52 to 120 (LTADQTTTNQ…QTTTNANEAK (69 aa)). Over residues 53 to 114 (TADQTTTNQD…STDTAAQTTT (62 aa)) the composition is skewed to low complexity. Cell wall-binding repeat units follow at residues 157–176 (MSNVKQVDGKYYYYDQDGNV) and 178–197 (KNFAVSVGEKIYYFDETGAY). Residues 200–1050 (TSKVEADKSG…DQASNKYLNV (851 aa)) form a catalytic; approximate region. Cell wall-binding repeat units follow at residues 1089–1108 (TDSFITEAGNLYYFGQDGYM), 1109–1128 (VTGAQNIKGSNYYFLANGAA), 1130–1150 (RNTVYTDAQGQNHYYGNDGKR), 1152–1172 (ENGYQQFGNDSWRYFKNGVMA), 1173–1191 (LGLTTVDGHVQYFDKDGVQ), 1193–1214 (KDKIIVTRDGKVRYFDQHNGNA), 1216–1236 (TNTFVADKTGHWYYLGKDGVA), 1237–1256 (VTGAQTVGKQHLYFEANGQQ), 1258–1279 (KGDFVTAKDGKLYFYDVDSGDM), 1281–1301 (TNTFIEDKAGNWFYLGKDGAA), 1302–1321 (VTGAQTIKGQKLYFKANGQQ), 1323–1343 (KGDIVKDADGKIRYYDAQTGE), 1344–1365 (QVFNKSVSVNGKTYYFGSDGTA), 1366–1380 (QTQANPKGQTFKDGS), 1415–1434 (LTGAQTIGNQRVYFKDNGHQ), 1436–1457 (KGQLVTGNDGKLRYYDANSGDQ), 1459–1478 (FNKSVTVNGKTYYFGSDGTA), 1485–1505 (KGQTFKDGSGVLRFYNLEGQY), 1508–1527 (GSGWYKNAQGQWLYVKDGKV), 1528–1547 (LTGLQTVGNQKVYFDKNGIQ), 1549–1570 (KGKAVRTSDGKVRYFDENSGSM), and 1572–1591 (TNQWKFVYGQYYYFGSDGAA). Positions 1099 to 1597 (LYYFGQDGYM…DGAAVYRGWN (499 aa)) are glucan-binding; approximate.

The protein belongs to the glycosyl hydrolase 70 family.

It localises to the secreted. It carries out the reaction [(1-&gt;6)-alpha-D-glucosyl](n) + sucrose = [(1-&gt;6)-alpha-D-glucosyl](n+1) + D-fructose. Functionally, production of extracellular glucans, that are thought to play a key role in the development of the dental plaque because of their ability to adhere to smooth surfaces and mediate the aggregation of bacterial cells and food debris. In Streptococcus downei (Streptococcus sobrinus), this protein is Glucosyltransferase-I (gtfI).